The sequence spans 280 residues: uncharacterized protein (280 aa).

CBS domains are found at residues 10–67 (QNKK…GSKY), 90–146 (MEEN…KIDE), 154–209 (ITRD…DWAF), and 229–280 (MKRD…KYFA).

This is an uncharacterized protein from Methanocaldococcus jannaschii (strain ATCC 43067 / DSM 2661 / JAL-1 / JCM 10045 / NBRC 100440) (Methanococcus jannaschii).